The primary structure comprises 98 residues: DNA-binding protein Fis (98 aa).

Residues 74–93 (QTRAALMMGINRGTLRKKLK) constitute a DNA-binding region (H-T-H motif).

The protein belongs to the transcriptional regulatory Fis family. In terms of assembly, homodimer.

In terms of biological role, activates ribosomal RNA transcription. Plays a direct role in upstream activation of rRNA promoters. The polypeptide is DNA-binding protein Fis (Enterobacter sp. (strain 638)).